The chain runs to 409 residues: Ingression protein 1 (409 aa).

Residues 1-114 (MSEEVWNGNQ…DPKEGYCTWY (114 aa)) form the C2 domain. The interval 300–409 (LSYDEDDDDD…TRKRPPPRLS (110 aa)) is disordered. The span at 302 to 313 (YDEDDDDDDEND) shows a compositional bias: acidic residues. Positions 315–328 (FYSSSHRVSHNYNQ) are enriched in polar residues. Residues 360–377 (LDSSSPNSHPHPSGLNSP) show a composition bias toward low complexity. A compositionally biased stretch (polar residues) spans 384–399 (TTSNSNFNSRKNSMSP). Ser-392 bears the Phosphoserine mark. The segment covering 400–409 (TRKRPPPRLS) has biased composition (basic residues).

The protein belongs to the INN1/fic1 family. As to quaternary structure, interacts with CYK2, CYK3 and IQG1.

Its subcellular location is the bud neck. In terms of biological role, required for the ingression of the plasma membrane into the bud neck at the end of cytokinesis, leading to the separation of the mother and daughter cells. Stimulates the synthesis of the primary septum (PS) by CHS2. The sequence is that of Ingression protein 1 (INN1) from Saccharomyces cerevisiae (strain ATCC 204508 / S288c) (Baker's yeast).